The primary structure comprises 94 residues: Large ribosomal subunit protein uL23 (94 aa).

Belongs to the universal ribosomal protein uL23 family. As to quaternary structure, part of the 50S ribosomal subunit. Contacts protein L29, and trigger factor when it is bound to the ribosome.

In terms of biological role, one of the early assembly proteins it binds 23S rRNA. One of the proteins that surrounds the polypeptide exit tunnel on the outside of the ribosome. Forms the main docking site for trigger factor binding to the ribosome. The chain is Large ribosomal subunit protein uL23 from Listeria innocua serovar 6a (strain ATCC BAA-680 / CLIP 11262).